The sequence spans 211 residues: GTP pyrophosphokinase YjbM (211 aa).

Residues 21 to 28 (KVKLKGIR), 41 to 42 (EF), and 46 to 48 (RVK) contribute to the guanosine 3'-diphosphate 5'-triphosphate site. ATP is bound by residues 46–48 (RVK), Ser52, 56–59 (KARR), Asp72, and Arg77. Arg59 contributes to the guanosine 3'-diphosphate 5'-triphosphate binding site. A Mg(2+)-binding site is contributed by Asp72. Residues Arg105, 112–114 (KES), and His120 each bind guanosine 3'-diphosphate 5'-triphosphate. Glu139 acts as the Proton acceptor in catalysis. Guanosine 3'-diphosphate 5'-triphosphate-binding positions include Asn148 and 151-155 (ATIEH).

It belongs to the RelA/SpoT family. As to quaternary structure, homotetramer.

It carries out the reaction GTP + ATP = guanosine 3'-diphosphate 5'-triphosphate + AMP. It catalyses the reaction GDP + ATP = guanosine 3',5'-bis(diphosphate) + AMP. Its pathway is purine metabolism; ppGpp biosynthesis; ppGpp from GTP: step 1/2. Its activity is regulated as follows. Allosterically regulated by its own products; pppGpp simulates synthesis 10-fold more than ppGpp. 2 pppGpp molecules bind in a regulatory cleft in the middle of the tetramer in an asymmetric manner. There is a specific contact of Lys-25 to the gamma-phosphate of pppGpp, explaining why pppGpp stimulates activity but ppGpp does not. Functionally, functions as a (p)ppGpp synthase; GDP can be used instead of GTP, resulting in an increase of (p)ppGpp synthesis. The enzyme binds ATP, then GDP or GTP and catalysis is highly cooperative. In eubacteria ppGpp (guanosine 3'-diphosphate 5'-diphosphate) is a mediator of the stringent response that coordinates a variety of cellular activities in response to changes in nutritional abundance. Probably has a minor role in the stringent response. The chain is GTP pyrophosphokinase YjbM (yjbM) from Bacillus subtilis (strain 168).